The primary structure comprises 253 residues: MNKALSVENLGFYYQAENFLFQQLNFDLNKGDILAVLGQNGCGKSTLLDLLLGIHRPIQGKIEVYQSIGFVPQFFSSPFAYSVLDIVLMGRSTHINTFAKPKSHDYQVAMQALDYLNLTHLAKREFTSLSGGQRQLILIARAIASECKLILLDEPTSALDLANQDIVLSLLIDLAQSQNMTVVFTTHQPNQVVAIANKTLLLNKQNFKFGETRNILTSENLTALFHLPMFEQQAQYKESFFTHFVPLYKTLLK.

An ABC transporter domain is found at leucine 5–methionine 229. Position 38–45 (glycine 38–serine 45) interacts with ATP.

Belongs to the ABC transporter superfamily. The complex is composed of two ATP-binding proteins (MolC), two transmembrane proteins (MolB) and a solute-binding protein (MolA).

It localises to the cell inner membrane. The enzyme catalyses molybdate(out) + ATP + H2O = molybdate(in) + ADP + phosphate + H(+). The MolBCA complex shows a decrease in affinity in the presence of increasing concentrations of substrate and nucleotide. In terms of biological role, part of the ABC transporter complex MolBCA involved in molybdate import. Responsible for energy coupling to the transport system. Functions as a low-affinity molybdate transporter. This Haemophilus influenzae (strain ATCC 51907 / DSM 11121 / KW20 / Rd) protein is Molybdate import ATP-binding protein MolC.